The primary structure comprises 232 residues: 7-cyano-7-deazaguanine synthase (232 aa).

8–18 provides a ligand contact to ATP; it reads FSGGQDSTTCL. 4 residues coordinate Zn(2+): C189, C198, C201, and C204.

It belongs to the QueC family. It depends on Zn(2+) as a cofactor.

It catalyses the reaction 7-carboxy-7-deazaguanine + NH4(+) + ATP = 7-cyano-7-deazaguanine + ADP + phosphate + H2O + H(+). The protein operates within purine metabolism; 7-cyano-7-deazaguanine biosynthesis. Its function is as follows. Catalyzes the ATP-dependent conversion of 7-carboxy-7-deazaguanine (CDG) to 7-cyano-7-deazaguanine (preQ(0)). The sequence is that of 7-cyano-7-deazaguanine synthase from Photorhabdus laumondii subsp. laumondii (strain DSM 15139 / CIP 105565 / TT01) (Photorhabdus luminescens subsp. laumondii).